Reading from the N-terminus, the 189-residue chain is Ion-translocating oxidoreductase complex subunit B (189 aa).

The tract at residues 1–26 (MSQVIIAIILLGLLALAFGALLGYAA) is hydrophobic. The 4Fe-4S domain maps to 32-90 (EGDPIIDQAEALLPQTQCGQCGYPGCRPYAEAIANGEKINKCPPGGTATMEKLAELMGV). [4Fe-4S] cluster is bound by residues C49, C52, C57, C73, C114, C117, C120, C124, C144, C147, C150, and C154. 4Fe-4S ferredoxin-type domains lie at 105-134 (KVAF…GTGK) and 135-164 (QMHT…MIPV).

Belongs to the 4Fe4S bacterial-type ferredoxin family. RnfB subfamily. In terms of assembly, the complex is composed of six subunits: RnfA, RnfB, RnfC, RnfD, RnfE and RnfG. The cofactor is [4Fe-4S] cluster.

It localises to the cell inner membrane. Part of a membrane-bound complex that couples electron transfer with translocation of ions across the membrane. This chain is Ion-translocating oxidoreductase complex subunit B, found in Shewanella loihica (strain ATCC BAA-1088 / PV-4).